The sequence spans 202 residues: MAFELPKLPYPANALEPHIDEATMNIHHGKHHNTYVTKLNAALEGHSALAEKSIEALVSDLDAVPENIRTAVRNNGGGHANHTLFWQILSPNGGGAPTGELADAINAEFGSFDQFKEKFADAAANRFGSGWAWLVVNDGKLEITSTPNQDTPLMEGKTPILGLDVWEHAYYLNYQNRRPDYISAFWNVVNWDEVAKRYNEAK.

Mn(2+) is bound at residue His-27. Phosphothreonine occurs at positions 34 and 70. Residues His-82, Asp-164, and His-168 each contribute to the Mn(2+) site.

The protein belongs to the iron/manganese superoxide dismutase family. As to quaternary structure, homodimer. The cofactor is Mn(2+).

It carries out the reaction 2 superoxide + 2 H(+) = H2O2 + O2. Its function is as follows. Destroys superoxide anion radicals which are normally produced within the cells and which are toxic to biological systems. In Halalkalibacterium halodurans (strain ATCC BAA-125 / DSM 18197 / FERM 7344 / JCM 9153 / C-125) (Bacillus halodurans), this protein is Superoxide dismutase [Mn] (sodA).